Here is a 60-residue protein sequence, read N- to C-terminus: Large ribosomal subunit protein uL30 (60 aa).

The protein belongs to the universal ribosomal protein uL30 family. In terms of assembly, part of the 50S ribosomal subunit.

The sequence is that of Large ribosomal subunit protein uL30 from Limosilactobacillus fermentum (strain NBRC 3956 / LMG 18251) (Lactobacillus fermentum).